The chain runs to 136 residues: Large ribosomal subunit protein eL27 (136 aa).

The KOW domain maps to 5–36; sequence MKPGKVVLVLRGKYAGRKAVVVKQQDEGVSDR.

The protein belongs to the eukaryotic ribosomal protein eL27 family. As to quaternary structure, component of the large ribosomal subunit.

The protein localises to the cytoplasm. It is found in the cytosol. It localises to the rough endoplasmic reticulum. In terms of biological role, component of the large ribosomal subunit. This is Large ribosomal subunit protein eL27 (rpl-27) from Caenorhabditis elegans.